The following is a 544-amino-acid chain: CTP synthase (544 aa).

The segment at 1 to 266 (MTKFIFVTGG…DDLICERFGL (266 aa)) is amidoligase domain. Ser-13 is a binding site for CTP. A UTP-binding site is contributed by Ser-13. ATP-binding positions include 14–19 (SLGKGI) and Asp-71. Mg(2+) is bound by residues Asp-71 and Glu-140. CTP-binding positions include 147–149 (DIE), 187–192 (KTKPTQ), and Lys-223. UTP contacts are provided by residues 187 to 192 (KTKPTQ) and Lys-223. The Glutamine amidotransferase type-1 domain maps to 291 to 543 (TVAMVGKYVE…VKAAKNYSEA (253 aa)). Gly-354 is a binding site for L-glutamine. The active-site Nucleophile; for glutamine hydrolysis is Cys-381. L-glutamine contacts are provided by residues 382-385 (LGMQ), Glu-404, and Arg-471. Active-site residues include His-516 and Glu-518.

The protein belongs to the CTP synthase family. As to quaternary structure, homotetramer.

The enzyme catalyses UTP + L-glutamine + ATP + H2O = CTP + L-glutamate + ADP + phosphate + 2 H(+). It catalyses the reaction L-glutamine + H2O = L-glutamate + NH4(+). The catalysed reaction is UTP + NH4(+) + ATP = CTP + ADP + phosphate + 2 H(+). Its pathway is pyrimidine metabolism; CTP biosynthesis via de novo pathway; CTP from UDP: step 2/2. Allosterically activated by GTP, when glutamine is the substrate; GTP has no effect on the reaction when ammonia is the substrate. The allosteric effector GTP functions by stabilizing the protein conformation that binds the tetrahedral intermediate(s) formed during glutamine hydrolysis. Inhibited by the product CTP, via allosteric rather than competitive inhibition. Catalyzes the ATP-dependent amination of UTP to CTP with either L-glutamine or ammonia as the source of nitrogen. Regulates intracellular CTP levels through interactions with the four ribonucleotide triphosphates. The protein is CTP synthase of Psychrobacter cryohalolentis (strain ATCC BAA-1226 / DSM 17306 / VKM B-2378 / K5).